Consider the following 173-residue polypeptide: Propanediol dehydratase small subunit (173 aa).

This sequence belongs to the diol/glycerol dehydratase small subunit family. The propanediol dehydratase enzyme is a heterotrimeric complex composed of a large (PduC), a medium (PduD) and a small (PduE) subunit. Requires adenosylcob(III)alamin as cofactor.

The protein resides in the bacterial microcompartment. It carries out the reaction propane-1,2-diol = propanal + H2O. Its pathway is polyol metabolism; 1,2-propanediol degradation. Its activity is regulated as follows. Inhibited by glycerol. In terms of biological role, part of the PduCDE complex that catalyzes the dehydration of 1,2-propanediol (1,2-PD) to propionaldehyde. Required for S.typhimurium growth on 1,2-PD as the sole carbon and energy source. Localized in the bacterial microcompartment (BMC) dedicated to 1,2-PD degradation. The 1,2-PD-specific bacterial microcompartment (BMC) concentrates low levels of 1,2-PD catabolic enzymes, concentrates volatile reaction intermediates thus enhancing pathway flux and keeps the level of toxic, mutagenic propionaldehyde low. The chain is Propanediol dehydratase small subunit from Salmonella typhimurium (strain LT2 / SGSC1412 / ATCC 700720).